A 243-amino-acid chain; its full sequence is Protein S40-7 (243 aa).

Disordered regions lie at residues 1–68 (MNKN…KSGL) and 107–143 (SSTA…ERLP). The segment covering 10–20 (SSPSSLATISD) has biased composition (polar residues). Acidic residues predominate over residues 22 to 32 (ADGELNEDDIF). Residues 47–67 (PVSSPAKQQTPARQLQRSKSG) are compositionally biased toward polar residues.

Belongs to the senescence regulator S40 family.

Its subcellular location is the cytoplasm. This chain is Protein S40-7, found in Arabidopsis thaliana (Mouse-ear cress).